We begin with the raw amino-acid sequence, 554 residues long: Sesquiterpene synthase 14b (554 aa).

Mg(2+) is bound by residues aspartate 305, aspartate 309, aspartate 449, and glutamate 457. The short motif at 305–309 (DDLYD) is the DDXXD motif element.

The protein belongs to the terpene synthase family. Tpsa subfamily. The cofactor is Mg(2+). It depends on Mn(2+) as a cofactor.

The catalysed reaction is (2E,6E)-farnesyl diphosphate = (E)-gamma-bisabolene + diphosphate. It carries out the reaction (2Z,6Z)-farnesyl diphosphate = (E)-gamma-bisabolene + diphosphate. It catalyses the reaction (2Z,6Z)-farnesyl diphosphate = (E)-alpha-bisabolene + diphosphate. The enzyme catalyses (2Z,6Z)-farnesyl diphosphate = (Z)-beta-farnesene + diphosphate. The catalysed reaction is (2E,6E)-farnesyl diphosphate = (E)-beta-farnesene + diphosphate. It carries out the reaction (2E,6E)-farnesyl diphosphate = (+)-thujopsene + diphosphate. It catalyses the reaction (2Z,6Z)-farnesyl diphosphate = (E)-beta-farnesene + diphosphate. The enzyme catalyses (2E,6E)-farnesyl diphosphate = (Z)-beta-farnesene + diphosphate. The catalysed reaction is (2Z,6Z)-farnesyl diphosphate = beta-acoradiene + diphosphate. It carries out the reaction (2Z,6Z)-farnesyl diphosphate = alpha-acoradiene + diphosphate. It catalyses the reaction (2Z,6Z)-farnesyl diphosphate = beta-bisabolene + diphosphate. The enzyme catalyses (2E,6E)-farnesyl diphosphate = (-)-alpha-cedrene + diphosphate. The catalysed reaction is (2E,6E)-farnesyl diphosphate = beta-bisabolene + diphosphate. It carries out the reaction (2E,6E)-farnesyl diphosphate = beta-acoradiene + diphosphate. It catalyses the reaction (2Z,6Z)-farnesyl diphosphate = (-)-alpha-cedrene + diphosphate. The enzyme catalyses (2E)-geranyl diphosphate = terpinolene + diphosphate. The catalysed reaction is (2E)-geranyl diphosphate = limonene + diphosphate. It carries out the reaction (2E)-geranyl diphosphate = beta-myrcene + diphosphate. Its pathway is secondary metabolite biosynthesis; terpenoid biosynthesis. In terms of biological role, sesquiterpene synthase involved in the biosynthesis of volatile compounds. Mediates the conversion of (2E,6E)-farnesyl diphosphate ((EE)-FPP) into (+)-thujopsene, beta-bisabolene, alpha-cederene, beta-acoradiene, (E)-gamma-bisabolene, (Z)-alpha-bisabolene, (Z)-beta-farnesene and (E)-beta-farnesene, and of (2Z,6Z)-farnesyl diphosphate ((ZZ)-FPP) into (E)-gamma-bisabolene, (E)-alpha-bisabolene, (E)-beta-farnesene, (Z)-beta-farnesene, beta-bisabolene, beta-acoradiene and alpha-acoradiene. Can act with a low efficiency as a monoterpene synthase with geranyl diphosphate (GPP) as substrate, thus producing beta-myrcene, limonene and terpinolene. This Solanum habrochaites (Wild tomato) protein is Sesquiterpene synthase 14b.